Reading from the N-terminus, the 282-residue chain is HTH-type transcriptional activator RhaR (282 aa).

The HTH araC/xylS-type domain maps to 179–277; the sequence is DKLITALANS…GMTPSQWRHL (99 aa). 2 DNA-binding regions (H-T-H motif) span residues 196-217 and 244-267; these read DAFC…RAQT and ISEI…TRET.

Binds DNA as a dimer.

The protein localises to the cytoplasm. Its function is as follows. Activates expression of the rhaSR operon in response to L-rhamnose. The sequence is that of HTH-type transcriptional activator RhaR from Salmonella agona (strain SL483).